We begin with the raw amino-acid sequence, 138 residues long: Integration host factor subunit beta (138 aa).

The span at 81–98 (KAGKELRERVDRSLERQG) shows a compositional bias: basic and acidic residues. The tract at residues 81 to 138 (KAGKELRERVDRSLERQGDSSSEGEPVSLTAVKAARQAGGHHAAGFPAEATPTLVMSR) is disordered.

Belongs to the bacterial histone-like protein family. Heterodimer of an alpha and a beta chain.

This protein is one of the two subunits of integration host factor, a specific DNA-binding protein that functions in genetic recombination as well as in transcriptional and translational control. This chain is Integration host factor subunit beta, found in Ralstonia nicotianae (strain ATCC BAA-1114 / GMI1000) (Ralstonia solanacearum).